The primary structure comprises 593 residues: V-type ATP synthase alpha chain (593 aa).

Glycine 246–threonine 253 contributes to the ATP binding site.

Belongs to the ATPase alpha/beta chains family.

It carries out the reaction ATP + H2O + 4 H(+)(in) = ADP + phosphate + 5 H(+)(out). Its function is as follows. Produces ATP from ADP in the presence of a proton gradient across the membrane. The V-type alpha chain is a catalytic subunit. This Protochlamydia amoebophila (strain UWE25) protein is V-type ATP synthase alpha chain.